Reading from the N-terminus, the 702-residue chain is Methionine--tRNA ligase (702 aa).

The short motif at 14-24 (PYANGPVHLGH) is the 'HIGH' region element. 4 residues coordinate Zn(2+): C146, C149, C159, and C162. The 'KMSKS' region signature appears at 344-348 (KFSKS). K347 provides a ligand contact to ATP. The tRNA-binding domain occupies 601-702 (DFLKVDLRVA…GDEINGQQIQ (102 aa)).

Belongs to the class-I aminoacyl-tRNA synthetase family. MetG type 1 subfamily. Homodimer. Zn(2+) is required as a cofactor.

It is found in the cytoplasm. It carries out the reaction tRNA(Met) + L-methionine + ATP = L-methionyl-tRNA(Met) + AMP + diphosphate. Functionally, is required not only for elongation of protein synthesis but also for the initiation of all mRNA translation through initiator tRNA(fMet) aminoacylation. The protein is Methionine--tRNA ligase of Chlorobium limicola (strain DSM 245 / NBRC 103803 / 6330).